Here is a 244-residue protein sequence, read N- to C-terminus: MSTSKRKRADEVQWNKRSTKKKASAPPVKKTGGKADRPSLQIQTLLHSGDTMITVPSGGGCDLISTYARGSDEGNRHTSETLTYKVGVDYHFVADAGACRYSNRGTGVMWLVYDTTPGGNSPSTKDIFAYPDALVAWPTTWKVSRELCHRFVVKRRWLFTMETDGRIGSDIPPTNQSWPPCKRNIDFHKFTSGLGVRTQWKNVTDGGVGAIQRGALYMVIAPGNGVTFTAHGQTRLYFKSVGNQ.

The short motif at 1 to 24 (MSTSKRKRADEVQWNKRSTKKKAS) is the Bipartite nuclear localization signal element. A disordered region spans residues 1-38 (MSTSKRKRADEVQWNKRSTKKKASAPPVKKTGGKADRP).

Belongs to the geminiviridae capsid protein family. Homomultimer. Interacts with the movement protein. Binds to single-stranded and double-stranded viral DNA.

It localises to the virion. The protein resides in the host nucleus. Functionally, encapsidates the viral genome into characteristic twinned ('geminate') particles. Binds the genomic viral ssDNA and shuttles it into and out of the cell nucleus. Plays a role in protection of the genome from degradation, virus acquisition and transmission by insect vectors, infectivity, and systemic movement. The CP of monopartite geminiviruses is absolutely essential for virus movement. The polypeptide is Capsid protein (Maize streak virus genotype E (isolate Pat) (MSV)).